We begin with the raw amino-acid sequence, 290 residues long: Elongation factor Ts, mitochondrial 1 (290 aa).

This sequence belongs to the EF-Ts family.

Its subcellular location is the mitochondrion. Associates with the EF-Tu.GDP complex and induces the exchange of GDP to GTP. It remains bound to the aminoacyl-tRNA.EF-Tu.GTP complex up to the GTP hydrolysis stage on the ribosome. The sequence is that of Elongation factor Ts, mitochondrial 1 from Postia placenta (strain ATCC 44394 / Madison 698-R) (Brown rot fungus).